The chain runs to 117 residues: Protein Wnt-6 (117 aa).

The O-palmitoleoyl serine; by PORCN moiety is linked to residue Ser1. Residues Cys83 and Cys98 are joined by a disulfide bond. N-linked (GlcNAc...) asparagine glycosylation occurs at Asn84.

The protein belongs to the Wnt family. In terms of processing, palmitoleoylation is required for efficient binding to frizzled receptors. Depalmitoleoylation leads to Wnt signaling pathway inhibition.

The protein localises to the secreted. The protein resides in the extracellular space. It localises to the extracellular matrix. Ligand for members of the frizzled family of seven transmembrane receptors. Probable developmental protein. May be a signaling molecule which affects the development of discrete regions of tissues. Is likely to signal over only few cell diameters. In Evasterias troschelii (Mottled sea star), this protein is Protein Wnt-6 (WNT-6).